The primary structure comprises 356 residues: Nitrilase, arylacetone-specific (356 aa).

One can recognise a CN hydrolase domain in the interval 7 to 280; that stretch reads VRAAAVQAAS…EGLIIADLNM (274 aa). Glu47 acts as the Proton acceptor in catalysis. The active-site Proton donor is Lys129. The Nucleophile role is filled by Cys163. The segment at 324-356 is disordered; sequence QEEAPEPHVQSTAAPVAVSQTQDSDTLLVQEPS. Polar residues predominate over residues 332–356; the sequence is VQSTAAPVAVSQTQDSDTLLVQEPS.

It belongs to the carbon-nitrogen hydrolase superfamily. Nitrilase family. Homohexamer.

It carries out the reaction a nitrile + 2 H2O = a carboxylate + NH4(+). Nitrilase that acts mostly on arylacetonitriles. This is Nitrilase, arylacetone-specific from Alcaligenes faecalis.